The primary structure comprises 454 residues: Tyrosine aminotransferase (454 aa).

M1 carries the N-acetylmethionine modification. The residue at position 280 (K280) is an N6-(pyridoxal phosphate)lysine. Position 448 is a phosphoserine (S448).

The protein belongs to the class-I pyridoxal-phosphate-dependent aminotransferase family. As to quaternary structure, homodimer. Pyridoxal 5'-phosphate serves as cofactor.

It catalyses the reaction L-tyrosine + 2-oxoglutarate = 3-(4-hydroxyphenyl)pyruvate + L-glutamate. It participates in amino-acid degradation; L-phenylalanine degradation; acetoacetate and fumarate from L-phenylalanine: step 2/6. Its function is as follows. Transaminase involved in tyrosine breakdown. Converts tyrosine to p-hydroxyphenylpyruvate. Can catalyze the reverse reaction, using glutamic acid, with 2-oxoglutarate as cosubstrate (in vitro). Has much lower affinity and transaminase activity towards phenylalanine. This chain is Tyrosine aminotransferase (TAT), found in Homo sapiens (Human).